The chain runs to 125 residues: Phosphoribosyl-AMP cyclohydrolase (125 aa).

Residue Asp74 coordinates Mg(2+). Cys75 is a binding site for Zn(2+). Mg(2+) is bound by residues Asp76 and Asp78. The Zn(2+) site is built by Cys92 and Cys99.

This sequence belongs to the PRA-CH family. In terms of assembly, homodimer. It depends on Mg(2+) as a cofactor. Zn(2+) is required as a cofactor.

The protein resides in the cytoplasm. It catalyses the reaction 1-(5-phospho-beta-D-ribosyl)-5'-AMP + H2O = 1-(5-phospho-beta-D-ribosyl)-5-[(5-phospho-beta-D-ribosylamino)methylideneamino]imidazole-4-carboxamide. It participates in amino-acid biosynthesis; L-histidine biosynthesis; L-histidine from 5-phospho-alpha-D-ribose 1-diphosphate: step 3/9. Its function is as follows. Catalyzes the hydrolysis of the adenine ring of phosphoribosyl-AMP. This is Phosphoribosyl-AMP cyclohydrolase from Citrifermentans bemidjiense (strain ATCC BAA-1014 / DSM 16622 / JCM 12645 / Bem) (Geobacter bemidjiensis).